Reading from the N-terminus, the 842-residue chain is Synaptonemal complex protein 2-like (842 aa).

4 disordered regions span residues 451-473 (GSLE…EPEQ), 505-560 (FARD…KQRV), 619-666 (STQK…SSLE), and 715-738 (EDAP…PGSV). Basic and acidic residues-rich tracts occupy residues 458–470 (TEER…KQDE) and 505–525 (FARD…HDLL). Over residues 543–559 (NHKRKSLRTYSQRKKQR) the composition is skewed to basic residues. Composition is skewed to basic and acidic residues over residues 624–633 (GLEKPERRGS) and 643–655 (RVTD…EPRS).

It belongs to the SYCP2 family. Specifically expressed in oocytes.

It is found in the nucleus. Its subcellular location is the chromosome. The protein resides in the centromere. Its function is as follows. Oocyte-specific protein that localizes to centromeres at the dictyate stage and regulates the survival of primordial oocytes. The polypeptide is Synaptonemal complex protein 2-like (Mus musculus (Mouse)).